Here is a 379-residue protein sequence, read N- to C-terminus: Ribosomal RNA large subunit methyltransferase G (379 aa).

The protein belongs to the methyltransferase superfamily. RlmG family.

The protein localises to the cytoplasm. The enzyme catalyses guanosine(1835) in 23S rRNA + S-adenosyl-L-methionine = N(2)-methylguanosine(1835) in 23S rRNA + S-adenosyl-L-homocysteine + H(+). Functionally, specifically methylates the guanine in position 1835 (m2G1835) of 23S rRNA. In Serratia proteamaculans (strain 568), this protein is Ribosomal RNA large subunit methyltransferase G.